The sequence spans 344 residues: C-C chemokine receptor-like 2 (344 aa).

Residues 1 to 43 (MANYTLAPEDEYDVLIEGELESDEAEQCDKYDAQALSAQLVPS) lie on the Extracellular side of the membrane. Asn-3 is a glycosylation site (N-linked (GlcNAc...) asparagine). A helical transmembrane segment spans residues 44-64 (LCSAVFVIGVLDNLLVVLILV). Topologically, residues 65-74 (KYKGLKRVEN) are cytoplasmic. The helical transmembrane segment at 75-95 (IYLLNLAVSNLCFLLTLPFWA) threads the bilayer. Over 96 to 104 (HAGGDPMCK) the chain is Extracellular. A disulfide bridge links Cys-103 with Cys-181. A helical membrane pass occupies residues 105–125 (ILIGLYFVGLYSETFFNCLLT). The Cytoplasmic portion of the chain corresponds to 126–144 (VQRYLVFLHKGNFFSARRR). The helical transmembrane segment at 145 to 165 (VPCGIITSVLAWVTAILATLP) threads the bilayer. Topologically, residues 166 to 198 (EFVVYKPQMEDQKYKCAFSRTPFLPADETFWKH) are extracellular. A helical transmembrane segment spans residues 199–219 (FLTLKMNISVLVLPLFIFTFL). Topologically, residues 220–238 (YVQMRKTLRFREQRYSLFK) are cytoplasmic. The helical transmembrane segment at 239–259 (LVFAIMVVFLLMWAPYNIAFF) threads the bilayer. Over 260–286 (LSTFKEHFSLSDCKSSYNLDKSVHITK) the chain is Extracellular. Residues 287-307 (LIATTHCCINPLLYAFLDGTF) traverse the membrane as a helical segment. Over 308 to 344 (SKYLCRCFHLRSNTPLQPRGQSAQGTSREEPDHSTEV) the chain is Cytoplasmic. Polar residues predominate over residues 324 to 333 (QPRGQSAQGT). The disordered stretch occupies residues 324 to 344 (QPRGQSAQGTSREEPDHSTEV). Basic and acidic residues predominate over residues 334-344 (SREEPDHSTEV).

It belongs to the G-protein coupled receptor 1 family. Expressed abundantly in immunal tissues such as spleen, fetal liver, lymph node and bone marrow. Strong expression also in lung and heart. Expressed in almost all hematopoietic cells including monocytes, macrophages, PMNs, T-cells (both CD4+ and CD8+), monocyte-derived iDCs, NK cells, and CD34+ progenitor cells. B-cells expressed isoform 1 but not isoform 2. Up-regulated on synovial neutrophils of rheumatoid arthritis patients.

Its subcellular location is the cell membrane. In terms of biological role, receptor for CCL19 and chemerin/RARRES2. Does not appear to be a signaling receptor, but may have a role in modulating chemokine-triggered immune responses by capturing and internalizing CCL19 or by presenting RARRES2 ligand to CMKLR1, a functional signaling receptors. Plays a critical role for the development of Th2 responses. The chain is C-C chemokine receptor-like 2 (CCRL2) from Homo sapiens (Human).